A 440-amino-acid polypeptide reads, in one-letter code: MSYNYFGKKILILGMGLTGISCINFFLKKGIKPKIIDESKHPSNFIKIPQNIEYSLGSLDHQWILESDLIVISPGISSFKPILIKARLLGIEIISDIELFSREVTCPIISITGTNGKSTVATMIEKIAKKSGYKAFLGGNIGVPVLEILDKEADLYIIELSSFQLENTFNLKSKIAVILNISEDHINRYPNGFQQYKNTKLSVYNQAEICIINSNDKIEKSLIHSKNKKWISFGTNRSDYRICSKSNDPILFFKNKKILNTSEILLYGYHNYNNILVSLAISDAMQFPRNDAINVLKSFSNLPHRFQIIKNEKGVRWINDSKSTNVNSTQVALNSIKTTGTIRLLLGGDSKSANFNILKNIFRTLKIKIYCFGRDGIKLSKICEKKSIYVENLKKAVILISKQVKSGDTVLLSPGCSSLDQFSNFEERGNLFIKLIKEIT.

113 to 119 (GTNGKST) contacts ATP.

This sequence belongs to the MurCDEF family.

It is found in the cytoplasm. It carries out the reaction UDP-N-acetyl-alpha-D-muramoyl-L-alanine + D-glutamate + ATP = UDP-N-acetyl-alpha-D-muramoyl-L-alanyl-D-glutamate + ADP + phosphate + H(+). The protein operates within cell wall biogenesis; peptidoglycan biosynthesis. Its function is as follows. Cell wall formation. Catalyzes the addition of glutamate to the nucleotide precursor UDP-N-acetylmuramoyl-L-alanine (UMA). In Buchnera aphidicola subsp. Acyrthosiphon pisum (strain Tuc7), this protein is UDP-N-acetylmuramoylalanine--D-glutamate ligase.